The sequence spans 265 residues: Thiazole synthase (265 aa).

Lys-103 (schiff-base intermediate with DXP) is an active-site residue. Residues Gly-164, Ala-190–Gly-191, and Asn-212–Thr-213 contribute to the 1-deoxy-D-xylulose 5-phosphate site.

This sequence belongs to the ThiG family. In terms of assembly, homotetramer. Forms heterodimers with either ThiH or ThiS.

The protein resides in the cytoplasm. It carries out the reaction [ThiS sulfur-carrier protein]-C-terminal-Gly-aminoethanethioate + 2-iminoacetate + 1-deoxy-D-xylulose 5-phosphate = [ThiS sulfur-carrier protein]-C-terminal Gly-Gly + 2-[(2R,5Z)-2-carboxy-4-methylthiazol-5(2H)-ylidene]ethyl phosphate + 2 H2O + H(+). It functions in the pathway cofactor biosynthesis; thiamine diphosphate biosynthesis. Its function is as follows. Catalyzes the rearrangement of 1-deoxy-D-xylulose 5-phosphate (DXP) to produce the thiazole phosphate moiety of thiamine. Sulfur is provided by the thiocarboxylate moiety of the carrier protein ThiS. In vitro, sulfur can be provided by H(2)S. This is Thiazole synthase from Bordetella pertussis (strain Tohama I / ATCC BAA-589 / NCTC 13251).